A 222-amino-acid chain; its full sequence is MFDEKNKFTDASFENCDLKNPADRDTLKQAADELLKMHRGKEEVCADVEEEKNESTDLLATLQDENKELKDQFLRLAADMENLRRRTIRDVADAKIYSIANFARDMLSVSDNLNRALEAIPADARESDTNLKMLAEGVEMTERAMMAALEHHGVKKICPEGQKFDPNFHQAMFEISNSDVPDNTVQQVVQAGYIIGERVLRPAMVGVAKGGPKENSTEADSA.

It belongs to the GrpE family. In terms of assembly, homodimer.

It localises to the cytoplasm. Its function is as follows. Participates actively in the response to hyperosmotic and heat shock by preventing the aggregation of stress-denatured proteins, in association with DnaK and GrpE. It is the nucleotide exchange factor for DnaK and may function as a thermosensor. Unfolded proteins bind initially to DnaJ; upon interaction with the DnaJ-bound protein, DnaK hydrolyzes its bound ATP, resulting in the formation of a stable complex. GrpE releases ADP from DnaK; ATP binding to DnaK triggers the release of the substrate protein, thus completing the reaction cycle. Several rounds of ATP-dependent interactions between DnaJ, DnaK and GrpE are required for fully efficient folding. The chain is Protein GrpE from Bartonella bacilliformis (strain ATCC 35685 / KC583 / Herrer 020/F12,63).